We begin with the raw amino-acid sequence, 299 residues long: NEDD8-activating enzyme E1 catalytic subunit (299 aa).

12–37 (GLGCEILKNLTMLSFVKQVHIVDIDT) provides a ligand contact to ATP. The active-site Glycyl thioester intermediate is the C168.

This sequence belongs to the ubiquitin-activating E1 family. UBA3 subfamily. Heterodimer of UBA3 and ULA1. Interacts with NEDD8 and UBC12.

The catalysed reaction is ATP + [NEDD8 protein] + [E1 NEDD8-activating enzyme]-L-cysteine = AMP + diphosphate + [E1 NEDD8-activating enzyme]-S-[NEDD8 protein]-yl-L-cysteine.. It participates in protein modification; protein neddylation. In terms of biological role, catalytic subunit of the dimeric UBA3-ULA1 E1 enzyme. E1 activates NEDD8/RUB1 by first adenylating its C-terminal glycine residue with ATP, thereafter linking this residue to the side chain of the catalytic cysteine, yielding a NEDD8-UBA3 thioester and free AMP. E1 finally transfers NEDD8 to the catalytic cysteine of UBC12. This chain is NEDD8-activating enzyme E1 catalytic subunit (UBA3), found in Saccharomyces cerevisiae (strain ATCC 204508 / S288c) (Baker's yeast).